The sequence spans 305 residues: GTPase Era (305 aa).

The Era-type G domain occupies 9–176; sequence KSGFISIIGR…LDTLPKYLPE (168 aa). Residues 17-24 are G1; it reads GRPNVGKS. 17–24 provides a ligand contact to GTP; the sequence is GRPNVGKS. The G2 stretch occupies residues 43 to 47; it reads QTTRN. Residues 64 to 67 form a G3 region; it reads DTPG. GTP is bound by residues 64–68 and 126–129; these read DTPGI and NKID. Positions 126-129 are G4; sequence NKID. The G5 stretch occupies residues 155–157; that stretch reads ISA. The 80-residue stretch at 207–286 folds into the KH type-2 domain; the sequence is TREEIPHSIA…YLELWVKVQK (80 aa).

Belongs to the TRAFAC class TrmE-Era-EngA-EngB-Septin-like GTPase superfamily. Era GTPase family. In terms of assembly, monomer.

Its subcellular location is the cytoplasm. The protein localises to the cell membrane. In terms of biological role, an essential GTPase that binds both GDP and GTP, with rapid nucleotide exchange. Plays a role in 16S rRNA processing and 30S ribosomal subunit biogenesis and possibly also in cell cycle regulation and energy metabolism. In Lysinibacillus sphaericus (strain C3-41), this protein is GTPase Era.